The following is a 340-amino-acid chain: Phosphatidylglycerol--prolipoprotein diacylglyceryl transferase (340 aa).

A run of 4 helical transmembrane segments spans residues 19-39 (IPLR…VWLG), 54-74 (ADIA…YHVI), 93-113 (IWEG…GAWI), and 119-139 (GIPL…AQAF). Residue R141 coordinates a 1,2-diacyl-sn-glycero-3-phospho-(1'-sn-glycerol). Helical transmembrane passes span 176-196 (HPTF…VIWA), 202-221 (LGHG…GRAW), and 238-258 (LNDW…VLSS). Positions 266-340 (EIVEPGASDT…ESAAESAKKV (75 aa)) are disordered. The segment covering 284 to 294 (DLGKDEDKATT) has biased composition (basic and acidic residues). The span at 295-307 (DKATATDTSTTTD) shows a compositional bias: low complexity. Over residues 326 to 340 (PSEKTESAAESAKKV) the composition is skewed to basic and acidic residues.

The protein belongs to the Lgt family.

It localises to the cell membrane. It carries out the reaction L-cysteinyl-[prolipoprotein] + a 1,2-diacyl-sn-glycero-3-phospho-(1'-sn-glycerol) = an S-1,2-diacyl-sn-glyceryl-L-cysteinyl-[prolipoprotein] + sn-glycerol 1-phosphate + H(+). The protein operates within protein modification; lipoprotein biosynthesis (diacylglyceryl transfer). In terms of biological role, catalyzes the transfer of the diacylglyceryl group from phosphatidylglycerol to the sulfhydryl group of the N-terminal cysteine of a prolipoprotein, the first step in the formation of mature lipoproteins. The chain is Phosphatidylglycerol--prolipoprotein diacylglyceryl transferase from Streptomyces avermitilis (strain ATCC 31267 / DSM 46492 / JCM 5070 / NBRC 14893 / NCIMB 12804 / NRRL 8165 / MA-4680).